The chain runs to 291 residues: Protein SpdB (291 aa).

A run of 3 helical transmembrane segments spans residues 24-44, 71-91, and 99-119; these read VVVIVMWLGEAMPWAVALVVG, ITGVGWGFGAVATGVLVAHAL, and WLAVAWLPLAAKALWLVHGLW.

It localises to the cell membrane. In terms of biological role, involved in plasmid transfer. The protein is Protein SpdB (spdB) of Streptomyces lividans.